Reading from the N-terminus, the 394-residue chain is RNA demethylase ALKBH5 (394 aa).

Disordered regions lie at residues Met1 to Gly26 and Ala48 to Arg83. An N-acetylalanine modification is found at Ala2. Lys57 participates in a covalent cross-link: Glycyl lysine isopeptide (Lys-Gly) (interchain with G-Cter in ubiquitin). The span at Lys59 to Arg83 shows a compositional bias: basic and acidic residues. Ser64 and Ser69 each carry phosphoserine. Positions Glu67 to Lys116 form a coiled coil. A Glycyl lysine isopeptide (Lys-Gly) (interchain with G-Cter in SUMO1) cross-link involves residue Lys86. The residue at position 87 (Ser87) is a Phosphoserine. Lys132 carries the N6-acetyllysine modification. Tyr139 is an active-site residue. The 2-oxoglutarate site is built by Asn193, Tyr195, and His204. A disulfide bridge connects residues Cys230 and Cys267. An N6-acetyllysine modification is found at Lys235. 2-oxoglutarate contacts are provided by His266 and Arg277. Positions Ser298–His394 are disordered. Lys321 participates in a covalent cross-link: Glycyl lysine isopeptide (Lys-Gly) (interchain with G-Cter in SUMO1). At Ser325 the chain carries Phosphoserine. Lys328 participates in a covalent cross-link: Glycyl lysine isopeptide (Lys-Gly) (interchain with G-Cter in SUMO2). The segment covering Lys328–Arg349 has biased composition (basic and acidic residues). Ser371 and Ser384 each carry phosphoserine.

It belongs to the alkB family. Monomer. Interacts with RBM33; promoting desumoylation by SENP1 and recruitment to N(6)-methyladenosine-containing mRNAs. Interacts (when acetylated by KAT8) with PSPC1; interaction facilitates recognition of N(6)-methyladenosine (m6A) mRNA. Fe(2+) serves as cofactor. Post-translationally, phosphorylated at Ser-87 and Ser-325 in response to reactive oxygen species (ROS), promoting sumoylation and inactivation. In terms of processing, acetylated by KAT8 at Lys-235, promoting interaction with PSPC1, thereby facilitating recognition of N(6)-methyladenosine (m6A) mRNA by ALKBH5. Deacetylated at Lys-235 by HDAC7. Sumoylated at Lys-86 and Lys-321 by PIAS4 following phosphorylation at Ser-87 and Ser-325 in response to reactive oxygen species (ROS), inhibiting the RNA demethylase activity. Desumoylated by SENP1; relieving RNA demethylase inhibition, leading to N(6)-methyladenosine-containing mRNAs demethylation. Post-translationally, ubiquitinated at Lys-57 via 'Lys-48'-linked polyubiquitin chain, leading to its degradation by the proteasome. Deubiquitinated at Lys-57 by USP9X, promoting its stabilizazion.

The protein localises to the nucleus speckle. The catalysed reaction is an N(6)-methyladenosine in mRNA + 2-oxoglutarate + O2 = an adenosine in mRNA + formaldehyde + succinate + CO2. RNA demethylase activity is inhibited following sumoylation. Inhibition is relieved following desumoylation. In terms of biological role, dioxygenase that specifically demethylates N(6)-methyladenosine (m6A) RNA, the most prevalent internal modification of messenger RNA (mRNA) in higher eukaryotes. Demethylates RNA by oxidative demethylation, which requires molecular oxygen, alpha-ketoglutarate and iron. Demethylation of m6A mRNA affects mRNA processing, translation and export. Can also demethylate N(6)-methyladenosine in single-stranded DNA (in vitro). Required for the late meiotic and haploid phases of spermatogenesis by mediating m6A demethylation in spermatocytes and round spermatids: m6A demethylation of target transcripts is required for correct splicing and the production of longer 3'-UTR mRNAs in male germ cells. Involved in paraspeckle assembly, a nuclear membraneless organelle, by undergoing liquid-liquid phase separation. Paraspeckle assembly is coupled with m6A demethylation of RNAs, such as NEAT1 non-coding RNA. Also acts as a negative regulator of T-cell development: inhibits gamma-delta T-cell proliferation via demethylation of JAG1 and NOTCH2 transcripts. Inhibits regulatory T-cell (Treg) recruitment by mediating demethylation and destabilization of CCL28 mRNAs. The sequence is that of RNA demethylase ALKBH5 (ALKBH5) from Bos taurus (Bovine).